The primary structure comprises 602 residues: Elongation factor 4 (602 aa).

Positions D6–K188 constitute a tr-type G domain. GTP contacts are provided by residues D18 to T23 and N135 to D138.

It belongs to the TRAFAC class translation factor GTPase superfamily. Classic translation factor GTPase family. LepA subfamily.

Its subcellular location is the cell inner membrane. The enzyme catalyses GTP + H2O = GDP + phosphate + H(+). Required for accurate and efficient protein synthesis under certain stress conditions. May act as a fidelity factor of the translation reaction, by catalyzing a one-codon backward translocation of tRNAs on improperly translocated ribosomes. Back-translocation proceeds from a post-translocation (POST) complex to a pre-translocation (PRE) complex, thus giving elongation factor G a second chance to translocate the tRNAs correctly. Binds to ribosomes in a GTP-dependent manner. The polypeptide is Elongation factor 4 (Brucella anthropi (strain ATCC 49188 / DSM 6882 / CCUG 24695 / JCM 21032 / LMG 3331 / NBRC 15819 / NCTC 12168 / Alc 37) (Ochrobactrum anthropi)).